A 183-amino-acid polypeptide reads, in one-letter code: Putative manganese efflux pump MntP (183 aa).

6 helical membrane passes run 3-23 (TISV…LSIY), 43-63 (TFGI…ILFI), 66-86 (ISLY…LMML), 107-127 (LIIM…TFSI), 134-154 (FLYT…GFIL), and 161-181 (ILGQ…SINI).

Belongs to the MntP (TC 9.B.29) family.

The protein resides in the cell inner membrane. Functionally, probably functions as a manganese efflux pump. In Fusobacterium nucleatum subsp. nucleatum (strain ATCC 25586 / DSM 15643 / BCRC 10681 / CIP 101130 / JCM 8532 / KCTC 2640 / LMG 13131 / VPI 4355), this protein is Putative manganese efflux pump MntP.